A 365-amino-acid chain; its full sequence is Paraneoplastic antigen Ma2 homolog (365 aa).

An N-acetylalanine modification is found at Ala2. The interval 336–365 (EEEDAYFEQESREEPGEREGSGCWNNSRNN) is disordered. Residues 344–355 (QESREEPGEREG) are compositionally biased toward basic and acidic residues.

It belongs to the PNMA family. As to expression, expressed in the cerebrum, cerebellum and testis.

The protein resides in the nucleus. It is found in the nucleolus. This chain is Paraneoplastic antigen Ma2 homolog (Pnma2), found in Mus musculus (Mouse).